The primary structure comprises 325 residues: UPF0285 protein MA_3856 (325 aa).

Belongs to the UPF0285 family.

The protein is UPF0285 protein MA_3856 of Methanosarcina acetivorans (strain ATCC 35395 / DSM 2834 / JCM 12185 / C2A).